The sequence spans 550 residues: Chaperonin GroEL 2 (550 aa).

Residues 30–33, Lys-51, 87–91, Gly-415, and Asp-496 each bind ATP; these read TLGP and DGTTT.

This sequence belongs to the chaperonin (HSP60) family. As to quaternary structure, forms a cylinder of 14 subunits composed of two heptameric rings stacked back-to-back. Interacts with the co-chaperonin GroES.

The protein localises to the cytoplasm. The enzyme catalyses ATP + H2O + a folded polypeptide = ADP + phosphate + an unfolded polypeptide.. In terms of biological role, together with its co-chaperonin GroES, plays an essential role in assisting protein folding. The GroEL-GroES system forms a nano-cage that allows encapsulation of the non-native substrate proteins and provides a physical environment optimized to promote and accelerate protein folding. This chain is Chaperonin GroEL 2, found in Bradyrhizobium diazoefficiens (strain JCM 10833 / BCRC 13528 / IAM 13628 / NBRC 14792 / USDA 110).